Here is a 332-residue protein sequence, read N- to C-terminus: Glycerol-3-phosphate dehydrogenase [NAD(P)+] (332 aa).

The NADPH site is built by Ser-10, Trp-11, Lys-31, and Lys-105. Positions 105, 136, and 138 each coordinate sn-glycerol 3-phosphate. Residue Ala-140 coordinates NADPH. Lys-191, Asp-244, Ser-254, Arg-255, and Asn-256 together coordinate sn-glycerol 3-phosphate. Catalysis depends on Lys-191, which acts as the Proton acceptor. Arg-255 serves as a coordination point for NADPH. Residues Val-279 and Glu-281 each contribute to the NADPH site.

This sequence belongs to the NAD-dependent glycerol-3-phosphate dehydrogenase family.

It is found in the cytoplasm. It carries out the reaction sn-glycerol 3-phosphate + NAD(+) = dihydroxyacetone phosphate + NADH + H(+). The catalysed reaction is sn-glycerol 3-phosphate + NADP(+) = dihydroxyacetone phosphate + NADPH + H(+). Its pathway is membrane lipid metabolism; glycerophospholipid metabolism. Catalyzes the reduction of the glycolytic intermediate dihydroxyacetone phosphate (DHAP) to sn-glycerol 3-phosphate (G3P), the key precursor for phospholipid synthesis. This chain is Glycerol-3-phosphate dehydrogenase [NAD(P)+], found in Anaeromyxobacter dehalogenans (strain 2CP-C).